A 135-amino-acid chain; its full sequence is Ribosome-binding factor A (135 aa).

Belongs to the RbfA family. In terms of assembly, monomer. Binds 30S ribosomal subunits, but not 50S ribosomal subunits or 70S ribosomes.

It localises to the cytoplasm. One of several proteins that assist in the late maturation steps of the functional core of the 30S ribosomal subunit. Associates with free 30S ribosomal subunits (but not with 30S subunits that are part of 70S ribosomes or polysomes). Required for efficient processing of 16S rRNA. May interact with the 5'-terminal helix region of 16S rRNA. This is Ribosome-binding factor A from Sinorhizobium fredii (strain NBRC 101917 / NGR234).